The following is an 879-amino-acid chain: Phosphoenolpyruvate carboxylase (879 aa).

Active-site residues include His-138 and Lys-545.

Belongs to the PEPCase type 1 family. Mg(2+) is required as a cofactor.

It carries out the reaction oxaloacetate + phosphate = phosphoenolpyruvate + hydrogencarbonate. Functionally, forms oxaloacetate, a four-carbon dicarboxylic acid source for the tricarboxylic acid cycle. This chain is Phosphoenolpyruvate carboxylase, found in Haemophilus influenzae (strain PittEE).